Reading from the N-terminus, the 490-residue chain is Probable glycine dehydrogenase (decarboxylating) subunit 2 (490 aa).

An N6-(pyridoxal phosphate)lysine modification is found at K273.

Belongs to the GcvP family. C-terminal subunit subfamily. As to quaternary structure, the glycine cleavage system is composed of four proteins: P, T, L and H. In this organism, the P 'protein' is a heterodimer of two subunits. It depends on pyridoxal 5'-phosphate as a cofactor.

It carries out the reaction N(6)-[(R)-lipoyl]-L-lysyl-[glycine-cleavage complex H protein] + glycine + H(+) = N(6)-[(R)-S(8)-aminomethyldihydrolipoyl]-L-lysyl-[glycine-cleavage complex H protein] + CO2. Its function is as follows. The glycine cleavage system catalyzes the degradation of glycine. The P protein binds the alpha-amino group of glycine through its pyridoxal phosphate cofactor; CO(2) is released and the remaining methylamine moiety is then transferred to the lipoamide cofactor of the H protein. This Staphylococcus aureus (strain MSSA476) protein is Probable glycine dehydrogenase (decarboxylating) subunit 2.